The primary structure comprises 145 residues: uncharacterized protein (145 aa).

This is an uncharacterized protein from Bacillus subtilis (strain 168).